The sequence spans 283 residues: Probable replication-associated protein repA1 (283 aa).

This sequence belongs to the IncFII RepA family.

Its function is as follows. This protein is essential for plasmid replication; it is involved in copy control functions. The protein is Probable replication-associated protein repA1 (repA1) of Buchnera aphidicola subsp. Schizaphis graminum (strain Sg).